A 364-amino-acid chain; its full sequence is Chorismate synthase (364 aa).

The segment at 41–60 (MQHDLDRRRPGTSRYTTARR) is disordered. Positions 48 and 54 each coordinate NADP(+). Residues 125–127 (RSS), 238–239 (NA), Gly-278, 293–297 (KPTSS), and Arg-319 each bind FMN.

The protein belongs to the chorismate synthase family. In terms of assembly, homotetramer. It depends on FMNH2 as a cofactor.

It catalyses the reaction 5-O-(1-carboxyvinyl)-3-phosphoshikimate = chorismate + phosphate. Its pathway is metabolic intermediate biosynthesis; chorismate biosynthesis; chorismate from D-erythrose 4-phosphate and phosphoenolpyruvate: step 7/7. Catalyzes the anti-1,4-elimination of the C-3 phosphate and the C-6 proR hydrogen from 5-enolpyruvylshikimate-3-phosphate (EPSP) to yield chorismate, which is the branch point compound that serves as the starting substrate for the three terminal pathways of aromatic amino acid biosynthesis. This reaction introduces a second double bond into the aromatic ring system. In Shewanella baltica (strain OS185), this protein is Chorismate synthase.